A 328-amino-acid chain; its full sequence is Ketol-acid reductoisomerase (NADP(+)) (328 aa).

Residues 2–182 (AKIYRDGDAS…GATRAGVIET (181 aa)) form the KARI N-terminal Rossmann domain. Residues 25–28 (YGIQ), Arg48, Ser53, and 83–86 (DMEQ) each bind NADP(+). The active site involves His108. An NADP(+)-binding site is contributed by Gly134. Positions 183-328 (TFAEETETDL…AEMRKLLFGP (146 aa)) constitute a KARI C-terminal knotted domain. The Mg(2+) site is built by Asp191, Glu195, Glu227, and Glu231. Ser252 lines the substrate pocket.

The protein belongs to the ketol-acid reductoisomerase family. Mg(2+) serves as cofactor.

The catalysed reaction is (2R)-2,3-dihydroxy-3-methylbutanoate + NADP(+) = (2S)-2-acetolactate + NADPH + H(+). It catalyses the reaction (2R,3R)-2,3-dihydroxy-3-methylpentanoate + NADP(+) = (S)-2-ethyl-2-hydroxy-3-oxobutanoate + NADPH + H(+). It participates in amino-acid biosynthesis; L-isoleucine biosynthesis; L-isoleucine from 2-oxobutanoate: step 2/4. It functions in the pathway amino-acid biosynthesis; L-valine biosynthesis; L-valine from pyruvate: step 2/4. In terms of biological role, involved in the biosynthesis of branched-chain amino acids (BCAA). Catalyzes an alkyl-migration followed by a ketol-acid reduction of (S)-2-acetolactate (S2AL) to yield (R)-2,3-dihydroxy-isovalerate. In the isomerase reaction, S2AL is rearranged via a Mg-dependent methyl migration to produce 3-hydroxy-3-methyl-2-ketobutyrate (HMKB). In the reductase reaction, this 2-ketoacid undergoes a metal-dependent reduction by NADPH to yield (R)-2,3-dihydroxy-isovalerate. In Pyrobaculum calidifontis (strain DSM 21063 / JCM 11548 / VA1), this protein is Ketol-acid reductoisomerase (NADP(+)).